Consider the following 305-residue polypeptide: Axin interactor, dorsalization-associated protein B (305 aa).

A compositionally biased stretch (acidic residues) spans 126–137 (ENLEVEEEEEDG). Residues 126-146 (ENLEVEEEEEDGGAGAGSPDL) are disordered. Positions 153 to 220 (GTLLPRLPSE…RKEDTYVHFN (68 aa)) are axin-binding. The 148-residue stretch at 156–303 (LPRLPSEPGM…LYLHLLQTLL (148 aa)) folds into the C2 Aida-type domain.

It belongs to the AIDA family.

Its function is as follows. Acts as a ventralizing factor during embryogenesis. Inhibits axin-mediated JNK activation by binding axin and disrupting axin homodimerization. This in turn antagonizes a Wnt/beta-catenin-independent dorsalization pathway activated by axin/JNK-signaling. The sequence is that of Axin interactor, dorsalization-associated protein B (aida-b) from Xenopus laevis (African clawed frog).